The primary structure comprises 1488 residues: Chromosome partition protein MukB (1488 aa).

34–41 (GGNGAGKS) lines the ATP pocket. 3 coiled-coil regions span residues 326-418 (LEAD…QYNQ), 444-472 (LDTF…QTAH), and 509-602 (RHLA…RRAP). The segment at 666-783 (PGGAEDQRLN…SLPIFGRAAR (118 aa)) is flexible hinge. Coiled-coil stretches lie at residues 835 to 923 (EAEI…AKLE), 977 to 1116 (EMLS…AKAG), and 1209 to 1265 (VEAI…LQSV). The segment at 1049–1074 (ADSGAEERARQRRDELHAQLSNNRSR) is disordered. The span at 1051-1065 (SGAEERARQRRDELH) shows a compositional bias: basic and acidic residues.

The protein belongs to the SMC family. MukB subfamily. In terms of assembly, homodimerization via its hinge domain. Binds to DNA via its C-terminal region. Interacts, and probably forms a ternary complex, with MukE and MukF via its C-terminal region. The complex formation is stimulated by calcium or magnesium. Interacts with tubulin-related protein FtsZ.

Its subcellular location is the cytoplasm. It is found in the nucleoid. Functionally, plays a central role in chromosome condensation, segregation and cell cycle progression. Functions as a homodimer, which is essential for chromosome partition. Involved in negative DNA supercoiling in vivo, and by this means organize and compact chromosomes. May achieve or facilitate chromosome segregation by condensation DNA from both sides of a centrally located replisome during cell division. This Salmonella agona (strain SL483) protein is Chromosome partition protein MukB.